We begin with the raw amino-acid sequence, 370 residues long: Spermidine/putrescine import ATP-binding protein PotA (370 aa).

The 231-residue stretch at 11 to 241 folds into the ABC transporter domain; the sequence is IELRSITKSY…PKNLFVAKFI (231 aa). Residue 43–50 coordinates ATP; sequence GPSGCGKT.

This sequence belongs to the ABC transporter superfamily. Spermidine/putrescine importer (TC 3.A.1.11.1) family. The complex is composed of two ATP-binding proteins (PotA), two transmembrane proteins (PotB and PotC) and a solute-binding protein (PotD).

It is found in the cell inner membrane. It carries out the reaction ATP + H2O + polyamine-[polyamine-binding protein]Side 1 = ADP + phosphate + polyamineSide 2 + [polyamine-binding protein]Side 1.. In terms of biological role, part of the ABC transporter complex PotABCD involved in spermidine/putrescine import. Responsible for energy coupling to the transport system. This chain is Spermidine/putrescine import ATP-binding protein PotA, found in Pasteurella multocida (strain Pm70).